The primary structure comprises 187 residues: UPF0301 protein GOX1459 (187 aa).

This sequence belongs to the UPF0301 (AlgH) family.

This chain is UPF0301 protein GOX1459, found in Gluconobacter oxydans (strain 621H) (Gluconobacter suboxydans).